The following is a 218-amino-acid chain: Large ribosomal subunit protein uL3 (218 aa).

Belongs to the universal ribosomal protein uL3 family. Part of the 50S ribosomal subunit. Forms a cluster with proteins L14 and L19.

One of the primary rRNA binding proteins, it binds directly near the 3'-end of the 23S rRNA, where it nucleates assembly of the 50S subunit. This Rhodococcus jostii (strain RHA1) protein is Large ribosomal subunit protein uL3.